The sequence spans 1428 residues: uncharacterized protein (1428 aa).

Disordered stretches follow at residues 1-53 (MAKK…AFKV), 249-274 (DIKH…KDSK), and 377-413 (KNGI…ETRA). The span at 16–33 (ATTSIPSRSASSPANKNQ) shows a compositional bias: polar residues. Over residues 34–51 (VKGEKNNKTQKVEPKNAF) the composition is skewed to basic and acidic residues. Positions 256–265 (KETQPSNQVD) are enriched in polar residues. The Helicase ATP-binding domain maps to 641–811 (IDAVNNSQLL…FEGSNLITIP (171 aa)). 654-661 (GDTGCGKS) serves as a coordination point for ATP. The DEAH box motif lies at 758–761 (DEVH). In terms of domain architecture, Helicase C-terminal spans 886-1064 (LIVYLLKYIF…EVVLRVKMCQ (179 aa)).

This sequence belongs to the helicase family. SKI2 subfamily.

It is found in the cytoplasm. This is an uncharacterized protein from Schizosaccharomyces pombe (strain 972 / ATCC 24843) (Fission yeast).